The following is a 486-amino-acid chain: ATP synthase subunit beta, chloroplastic (486 aa).

154–161 (GGAGVGKT) is an ATP binding site.

The protein belongs to the ATPase alpha/beta chains family. As to quaternary structure, F-type ATPases have 2 components, CF(1) - the catalytic core - and CF(0) - the membrane proton channel. CF(1) has five subunits: alpha(3), beta(3), gamma(1), delta(1), epsilon(1). CF(0) has four main subunits: a(1), b(1), b'(1) and c(9-12).

The protein localises to the plastid. The protein resides in the chloroplast thylakoid membrane. It catalyses the reaction ATP + H2O + 4 H(+)(in) = ADP + phosphate + 5 H(+)(out). Produces ATP from ADP in the presence of a proton gradient across the membrane. The catalytic sites are hosted primarily by the beta subunits. The protein is ATP synthase subunit beta, chloroplastic of Dennstaedtia punctilobula (Hay-scented fern).